A 371-amino-acid chain; its full sequence is Transcription termination/antitermination protein NusA (371 aa).

The S1 motif domain occupies 135–199; it reads EDIMTGIVQR…KGPQIYVSRT (65 aa). Residues 301-367 form the KH domain; the sequence is EKATTVIVPD…EPLFTEPETA (67 aa). Positions 347 to 371 are disordered; sequence GIYPRELEEDDEPLFTEPETAESDE. Acidic residues predominate over residues 353–371; sequence LEEDDEPLFTEPETAESDE.

Belongs to the NusA family. As to quaternary structure, monomer. Binds directly to the core enzyme of the DNA-dependent RNA polymerase and to nascent RNA.

It localises to the cytoplasm. Participates in both transcription termination and antitermination. This Bacillus subtilis (strain 168) protein is Transcription termination/antitermination protein NusA.